A 171-amino-acid chain; its full sequence is Probable deoxyuridine 5'-triphosphate nucleotidohydrolase (171 aa).

This sequence belongs to the dCTP deaminase family. Archaeal dUTPase subfamily.

The catalysed reaction is dUTP + H2O = dUMP + diphosphate + H(+). Its pathway is pyrimidine metabolism; dUMP biosynthesis; dUMP from dCTP (dUTP route): step 2/2. This enzyme is involved in nucleotide metabolism: it produces dUMP, the immediate precursor of thymidine nucleotides and it decreases the intracellular concentration of dUTP so that uracil cannot be incorporated into DNA. The chain is Probable deoxyuridine 5'-triphosphate nucleotidohydrolase from Methanosarcina barkeri (strain Fusaro / DSM 804).